Here is a 92-residue protein sequence, read N- to C-terminus: Small ribosomal subunit protein bS20 (92 aa).

Residues 1–23 are disordered; sequence MANTPSAKKRAKQAEKRRSHNAS. Residues 7–20 are compositionally biased toward basic residues; sequence AKKRAKQAEKRRSH.

It belongs to the bacterial ribosomal protein bS20 family.

Its function is as follows. Binds directly to 16S ribosomal RNA. This Pseudomonas entomophila (strain L48) protein is Small ribosomal subunit protein bS20.